The sequence spans 316 residues: Ribosomal RNA small subunit methyltransferase H (316 aa).

Residues Ser-35 to His-37, Asp-55, Phe-84, Asp-105, and Gln-112 each bind S-adenosyl-L-methionine.

The protein belongs to the methyltransferase superfamily. RsmH family.

The protein resides in the cytoplasm. It catalyses the reaction cytidine(1402) in 16S rRNA + S-adenosyl-L-methionine = N(4)-methylcytidine(1402) in 16S rRNA + S-adenosyl-L-homocysteine + H(+). Specifically methylates the N4 position of cytidine in position 1402 (C1402) of 16S rRNA. The sequence is that of Ribosomal RNA small subunit methyltransferase H from Streptococcus pyogenes serotype M18 (strain MGAS8232).